Consider the following 253-residue polypeptide: Imidazole glycerol phosphate synthase subunit HisF (253 aa).

Catalysis depends on residues Asp-11 and Asp-130.

Belongs to the HisA/HisF family. As to quaternary structure, heterodimer of HisH and HisF.

The protein resides in the cytoplasm. It catalyses the reaction 5-[(5-phospho-1-deoxy-D-ribulos-1-ylimino)methylamino]-1-(5-phospho-beta-D-ribosyl)imidazole-4-carboxamide + L-glutamine = D-erythro-1-(imidazol-4-yl)glycerol 3-phosphate + 5-amino-1-(5-phospho-beta-D-ribosyl)imidazole-4-carboxamide + L-glutamate + H(+). Its pathway is amino-acid biosynthesis; L-histidine biosynthesis; L-histidine from 5-phospho-alpha-D-ribose 1-diphosphate: step 5/9. IGPS catalyzes the conversion of PRFAR and glutamine to IGP, AICAR and glutamate. The HisF subunit catalyzes the cyclization activity that produces IGP and AICAR from PRFAR using the ammonia provided by the HisH subunit. This is Imidazole glycerol phosphate synthase subunit HisF from Methylibium petroleiphilum (strain ATCC BAA-1232 / LMG 22953 / PM1).